Reading from the N-terminus, the 811-residue chain is G-type lectin S-receptor-like serine/threonine-protein kinase LECRK3 (811 aa).

An N-terminal signal peptide occupies residues 1–23 (MAHLLFLPILQLLLLYCTKSAQA). The Bulb-type lectin domain maps to 24-153 (QLNISIGSSL…DGATKWESFG (130 aa)). Over 24–464 (QLNISIGSSL…DKKYWILGSS (441 aa)) the chain is Extracellular. 7 N-linked (GlcNAc...) asparagine glycosylation sites follow: Asn-26, Asn-39, Asn-59, Asn-219, Asn-226, Asn-237, and Asn-242. Residues 292–344 (PENICQSIQTMVGSGACGFNSYCTIDGTKNTTSCLCPQNYKFIDDKRKYKGCR) form the EGF-like; atypical domain. 5 disulfide bridges follow: Cys-296–Cys-314, Cys-308–Cys-325, Cys-327–Cys-343, Cys-389–Cys-411, and Cys-393–Cys-399. N-linked (GlcNAc...) asparagine glycosylation is present at Asn-321. The PAN domain maps to 352 to 430 (CDLDETTAML…GKMDVNVPRT (79 aa)). The helical transmembrane segment at 465 to 485 (LLFGSSVLVNFLLISVMLFGT) threads the bilayer. Residues 486–811 (YCSITSRKKI…DPSSYISSLA (326 aa)) lie on the Cytoplasmic side of the membrane. The region spanning 521–795 (GGFQEVLGTG…KVTQMLDGAV (275 aa)) is the Protein kinase domain. ATP-binding positions include 527–535 (LGTGASGVV) and Lys-551. Asp-645 (proton acceptor) is an active-site residue.

It belongs to the protein kinase superfamily. Ser/Thr protein kinase family.

The protein resides in the membrane. It catalyses the reaction L-seryl-[protein] + ATP = O-phospho-L-seryl-[protein] + ADP + H(+). The enzyme catalyses L-threonyl-[protein] + ATP = O-phospho-L-threonyl-[protein] + ADP + H(+). In terms of biological role, involved in resistance against the herbivorous insect brown planthopper (N.lugens, BPH). Member of the BPH3 (BPH resistance locus 3) cluster which contains LECRK1, LECRK2 and LECRK3. This Oryza sativa subsp. indica (Rice) protein is G-type lectin S-receptor-like serine/threonine-protein kinase LECRK3.